The primary structure comprises 239 residues: ATP-dependent dethiobiotin synthetase BioD (239 aa).

15–20 (EIGKTF) contacts ATP. A Mg(2+)-binding site is contributed by T19. The active site involves K40. Residues D57, 118 to 121 (EGVG), and 178 to 179 (NH) contribute to the ATP site. Mg(2+) contacts are provided by D57 and E118.

The protein belongs to the dethiobiotin synthetase family. As to quaternary structure, homodimer. Mg(2+) serves as cofactor.

The protein resides in the cytoplasm. It catalyses the reaction (7R,8S)-7,8-diammoniononanoate + CO2 + ATP = (4R,5S)-dethiobiotin + ADP + phosphate + 3 H(+). It functions in the pathway cofactor biosynthesis; biotin biosynthesis; biotin from 7,8-diaminononanoate: step 1/2. In terms of biological role, catalyzes a mechanistically unusual reaction, the ATP-dependent insertion of CO2 between the N7 and N8 nitrogen atoms of 7,8-diaminopelargonic acid (DAPA, also called 7,8-diammoniononanoate) to form a ureido ring. The polypeptide is ATP-dependent dethiobiotin synthetase BioD (Burkholderia orbicola (strain MC0-3)).